The chain runs to 427 residues: Tumor necrosis factor receptor superfamily member 16 (427 aa).

The signal sequence occupies residues 1–31 (MRRAGAACSAMDRLRLLLLLLLLLGVSFGGA). Over 32–254 (KETCSTGMYT…VVTRGTADNL (223 aa)) the chain is Extracellular. TNFR-Cys repeat units follow at residues 34-67 (TCST…QTVC), 69-110 (PCLD…DAVC), 111-149 (RCSY…NTVC), and 151-191 (ECPE…DAEC). Cystine bridges form between C35–C46, C47–C60, C50–C67, C70–C86, C89–C102, C92–C110, C112–C125, C128–C141, C131–C149, C152–C167, C170–C183, and C173–C191. N-linked (GlcNAc...) asparagine glycosylation is present at N63. Positions 197-223 (RWITRSTPPEGSDVTTPSTQEPEAPPE) are disordered. Polar residues predominate over residues 200 to 217 (TRSTPPEGSDVTTPSTQE). A helical transmembrane segment spans residues 255–275 (IPVYCSILAAVVVGLVAYIAF). At 276–427 (KRWNSCKQNK…CSESTATSPV (152 aa)) the chain is on the cytoplasmic side. Polar residues-rich tracts occupy residues 284–294 (NKQGANSRPVN) and 308–329 (SGIS…TASG). Residues 284-334 (NKQGANSRPVNQTPPPEGEKLHSDSGISVDSQSLHDQQTHTQTASGQALKG) are disordered. Phosphoserine is present on S314. The segment at 329 to 344 (GQALKGDGNLYSSLPL) is mediates interaction with KIDINS220. The Death domain maps to 356-421 (GDTWRHLAGE…DIVESLCSES (66 aa)).

Homodimer; disulfide-linked. Heterodimer with SORCS2. The extracellular domains of the heterodimer bind NGF. The cytoplasmic region of the heterodimer binds TRIO. NGF binding mediates dissociation of TRIO from the receptor complex. Interacts with TRAF2, TRAF4, TRAF6, PTPN13 and RANBP9. Interacts through TRAF6 with SQSTM1 which bridges NGFR to NTRK1. Interacts with BEX1. Interacts with BEX3. Interacts with KIDINS220 and NTRK1. Can form a ternary complex with NTRK1 and KIDINS220 and this complex is affected by the expression levels of KIDINS220. An increase in KIDINS220 expression leads to a decreased association of NGFR and NTRK1. Interacts (via death domain) with RAB31. Interacts with NTRK2; may regulate the ligand specificity of the NTRK2 receptor. Interacts with LINGO1. Interacts with NRADD. Interacts with MAGED1; the interaction antagonizes the association NGFR:NTRK1. Interacts with RTN4R. Interacts (via death domain) with ARHGDIA and RIPK2. Interacts with BFAR. As to quaternary structure, (Microbial infection) Binds to rabies virus glycoprotein Gs. Post-translationally, N-glycosylated. O-glycosylated. In terms of processing, phosphorylated on serine residues. Detected in Schwann cells. Detected in embryonic brain, in hippocampus neurons (at protein level). Detected in brain and spinal cord.

Its subcellular location is the cell membrane. It localises to the cytoplasm. The protein localises to the perikaryon. The protein resides in the cell projection. It is found in the growth cone. Its subcellular location is the dendritic spine. In terms of biological role, low affinity neurotrophin receptor which can bind to mature NGF, BDNF, NTF3, and NTF4. Forms a heterodimeric receptor with SORCS2 that binds the precursor forms of NGF (proNGF), BDNF (proBDNF) and NTF3 (proNT3) with high affinity, and has much lower affinity for mature NGF and BDNF. Plays an important role in differentiation and survival of specific neuronal populations during development. Can mediate cell survival as well as cell death of neural cells. The heterodimeric receptor formed with SORCS2 plays a role in proBDNF-dependent synaptic plasticity, in hippocampal long term depression (LTD) and long term potentiation (LTP). Plays a role in the inactivation of RHOA. Plays a role in the regulation of the translocation of GLUT4 to the cell surface in adipocytes and skeletal muscle cells in response to insulin, probably by regulating RAB31 activity, and thereby contributes to the regulation of insulin-dependent glucose uptake. Necessary for the circadian oscillation of the clock genes BMAL1, PER1, PER2 and NR1D1 in the suprachiasmatic nucleus (SCN) of the brain and in liver and of the genes involved in glucose and lipid metabolism in the liver. Its function is as follows. (Microbial infection) Cell surface receptor for rabies virus glycoprotein Gs. Functionally, does not bind NGF, BDNF, NTF3, and NTF4. This is Tumor necrosis factor receptor superfamily member 16 (Ngfr) from Mus musculus (Mouse).